Here is a 1834-residue protein sequence, read N- to C-terminus: Non-reducing polyketide synthase spyA (1834 aa).

The region spanning 91-255 (LAPLTVIIHL…TRIPIYGRYH (165 aa)) is the Starter acyltransferase (SAT) domain. The Ketosynthase family 3 (KS3) domain occupies 385-801 (EHSIAVIGAA…GNNTAVIVCE (417 aa)). Active-site for beta-ketoacyl synthase activity residues include cysteine 551, histidine 687, and histidine 724. Positions 919–1164 (YEGSSLLRSH…KELGPCTWVE (246 aa)) constitute a Malonyl-CoA:ACP transacylase (MAT) domain. Positions 1269–1398 (PLVYLLRDEG…GVISLRQERH (130 aa)) are N-terminal hotdog fold. A PKS/mFAS DH domain is found at 1269 to 1577 (PLVYLLRDEG…FVRITASSLN (309 aa)). The product template (PT) domain stretch occupies residues 1269-1577 (PLVYLLRDEG…FVRITASSLN (309 aa)). Residues 1428–1577 (AISLKEGIIY…FVRITASSLN (150 aa)) are C-terminal hotdog fold. The Carrier 1 domain maps to 1616–1690 (SDILSILSHL…TLCQEIQTQR (75 aa)). O-(pantetheine 4'-phosphoryl)serine is present on serine 1650. Residues 1693-1720 (RLARASRTTTATRNTSFSLGRRTSSTES) are disordered. Residues 1697–1710 (ASRTTTATRNTSFS) are compositionally biased toward low complexity. The 77-residue stretch at 1731–1807 (SKSAAVLAQL…GLARLILASE (77 aa)) folds into the Carrier 2 domain. Serine 1767 carries the post-translational modification O-(pantetheine 4'-phosphoryl)serine.

Requires pantetheine 4'-phosphate as cofactor.

It catalyses the reaction 2 malonyl-CoA + acetyl-CoA + 2 H(+) = triacetate lactone + 2 CO2 + 3 CoA. Its pathway is secondary metabolite biosynthesis; terpenoid biosynthesis. Functionally, non-reducing polyketide synthase; part of the gene cluster that mediates the biosynthesis of meroterpenoids called sartorypyrones. The biosynthesis of sartorypyrones begins with the production of triacetic acid lactone (TAL) by the NR-PKS spyA using one molecule of acetyl-CoA and two molecules of malonyl-CoA. As spyA lacks a thioesterase (TE) domain, TAL is likely generated through self-release from spyA by spontaneous lactonization. After production of TAL, the prenyltransferase spyF then conjugates geranylgeranyl pyrophosphate (GGPP) to TAL to form geranylgeranyl-triacetate lactone, for which the pathway-specific geranylgeranyl pyrophosphate synthase (GGPS) spyE is required to provide GGPP. Subsequently, geranylgeranyl-triacetate lactone is epoxidized at the terminal olein by the FAD-dependent monooxygenase spyC, followed by cyclization of the terpenoid component catalyzed by the terpene cyclase spyD to produce both the bicyclic sartorypyrone F and the monocyclic sartorypyrone D. Finally, the last step of the biosynthesis involves the acetylation of the meroterpenoids sartorypyrones D and F by the acetyltransferase SpyB to produce sartorypyrones A and G, respectively. The protein is Non-reducing polyketide synthase spyA of Aspergillus fumigatus (strain ATCC MYA-4609 / CBS 101355 / FGSC A1100 / Af293) (Neosartorya fumigata).